The primary structure comprises 233 residues: Small ribosomal subunit protein uS3 (233 aa).

A KH type-2 domain is found at 39 to 107 (VRQFLMKTLE…PVQINISEVR (69 aa)).

It belongs to the universal ribosomal protein uS3 family. Part of the 30S ribosomal subunit. Forms a tight complex with proteins S10 and S14.

Its function is as follows. Binds the lower part of the 30S subunit head. Binds mRNA in the 70S ribosome, positioning it for translation. The chain is Small ribosomal subunit protein uS3 from Buchnera aphidicola subsp. Acyrthosiphon pisum (strain APS) (Acyrthosiphon pisum symbiotic bacterium).